The chain runs to 332 residues: Beta-ketoacyl-[acyl-carrier-protein] synthase III (332 aa).

Active-site residues include cysteine 114 and histidine 255. The segment at 256-260 (QANLR) is ACP-binding. Asparagine 285 is an active-site residue.

Belongs to the thiolase-like superfamily. FabH family. As to quaternary structure, homodimer.

The protein resides in the cytoplasm. The catalysed reaction is malonyl-[ACP] + acetyl-CoA + H(+) = 3-oxobutanoyl-[ACP] + CO2 + CoA. The protein operates within lipid metabolism; fatty acid biosynthesis. Its function is as follows. Catalyzes the condensation reaction of fatty acid synthesis by the addition to an acyl acceptor of two carbons from malonyl-ACP. Catalyzes the first condensation reaction which initiates fatty acid synthesis and may therefore play a role in governing the total rate of fatty acid production. Possesses both acetoacetyl-ACP synthase and acetyl transacylase activities. Its substrate specificity determines the biosynthesis of branched-chain and/or straight-chain of fatty acids. This is Beta-ketoacyl-[acyl-carrier-protein] synthase III from Sulfurimonas denitrificans (strain ATCC 33889 / DSM 1251) (Thiomicrospira denitrificans (strain ATCC 33889 / DSM 1251)).